The chain runs to 287 residues: Glutamate racemase (287 aa).

The segment covering 1–15 (MATKPQDANTTSREA) has biased composition (polar residues). Positions 1–25 (MATKPQDANTTSREAITSKADSPPR) are disordered. Substrate is bound by residues 32–33 (DS) and 64–65 (YG). The active-site Proton donor/acceptor is C96. Residue 97-98 (NT) coordinates substrate. C208 serves as the catalytic Proton donor/acceptor. 209–210 (TH) provides a ligand contact to substrate.

The protein belongs to the aspartate/glutamate racemases family.

The catalysed reaction is L-glutamate = D-glutamate. It functions in the pathway cell wall biogenesis; peptidoglycan biosynthesis. Functionally, provides the (R)-glutamate required for cell wall biosynthesis. The polypeptide is Glutamate racemase (Yersinia pseudotuberculosis serotype O:1b (strain IP 31758)).